The sequence spans 503 residues: Cobyric acid synthase (503 aa).

Residues 255-444 (DIDIAVIRYP…FHDLFHNDAF (190 aa)) enclose the GATase cobBQ-type domain. Catalysis depends on cysteine 337, which acts as the Nucleophile. Histidine 436 is a catalytic residue.

Belongs to the CobB/CobQ family. CobQ subfamily.

It functions in the pathway cofactor biosynthesis; adenosylcobalamin biosynthesis. Functionally, catalyzes amidations at positions B, D, E, and G on adenosylcobyrinic A,C-diamide. NH(2) groups are provided by glutamine, and one molecule of ATP is hydrogenolyzed for each amidation. The sequence is that of Cobyric acid synthase from Geobacillus sp. (strain WCH70).